Here is a 295-residue protein sequence, read N- to C-terminus: Protease HtpX (295 aa).

The next 2 membrane-spanning stretches (helical) occupy residues 4-24 and 41-61; these read ILLFVATNLAVVLVASITLSL and SSLLVFCAVFGFAGSLVSLFI. Position 147 (His-147) interacts with Zn(2+). Glu-148 is a catalytic residue. His-151 lines the Zn(2+) pocket. 2 consecutive transmembrane segments (helical) span residues 158–178 and 199–219; these read VTLALVQGVVNTFVMFFARII and VATIVAELILGILASMIVMWF. Glu-224 is a Zn(2+) binding site.

It belongs to the peptidase M48B family. The cofactor is Zn(2+).

The protein localises to the cell inner membrane. In Pseudomonas putida (strain ATCC 47054 / DSM 6125 / CFBP 8728 / NCIMB 11950 / KT2440), this protein is Protease HtpX.